The primary structure comprises 400 residues: Jasmonate-induced oxygenase 1 (400 aa).

A Fe2OG dioxygenase domain is found at 248–349; that stretch reads DVGACLRVNY…RVSLAFFYNP (102 aa). R254 is a jasmonate binding site. Positions 256 and 258 each coordinate 2-oxoglutarate. The Fe cation site is built by H273, D275, and H330. 2-oxoglutarate contacts are provided by R340 and S342. Jasmonate is bound by residues R379 and R383.

This sequence belongs to the iron/ascorbate-dependent oxidoreductase family. It depends on L-ascorbate as a cofactor. Fe(2+) serves as cofactor.

It carries out the reaction jasmonate + 2-oxoglutarate + O2 = (1R,2R)-12-hydroxyjasmonate + succinate + CO2. Its function is as follows. 2-oxoglutarate-dependent dioxygenase involved in the oxidation of jasmonate (JA), a stress-induced phytohormone synthesized in response to attack by pathogens and herbivores, which triggers the activation of defense responses via the JA-mediated signaling pathway. Converts JA to 12-hydroxyjasmonate (12OH-JA), an inactive form of JA. Prevents over-accumulation of JA and indirectly its bioactive form JA-Ile under stress response. Acts as a negative regulator of JA-mediated defense signaling, by contributing to 12OH-JA accumulation, which represses JA defense responses upon infection by the fungal pathogen Botrytis cinerea and the herbivorous caterpillar Mamestra brassicae. The polypeptide is Jasmonate-induced oxygenase 1 (Arabidopsis thaliana (Mouse-ear cress)).